The primary structure comprises 349 residues: Anthranilate phosphoribosyltransferase (349 aa).

Residues Gly-81, 84–85 (GD), Thr-89, 91–94 (NVST), 109–117 (KHGNRAASS), and Ala-121 each bind 5-phospho-alpha-D-ribose 1-diphosphate. Residue Gly-81 coordinates anthranilate. Position 93 (Ser-93) interacts with Mg(2+). Residue Asn-112 participates in anthranilate binding. An anthranilate-binding site is contributed by Arg-167. Residues Asp-226 and Glu-227 each coordinate Mg(2+).

This sequence belongs to the anthranilate phosphoribosyltransferase family. In terms of assembly, homodimer. Mg(2+) serves as cofactor.

It carries out the reaction N-(5-phospho-beta-D-ribosyl)anthranilate + diphosphate = 5-phospho-alpha-D-ribose 1-diphosphate + anthranilate. It participates in amino-acid biosynthesis; L-tryptophan biosynthesis; L-tryptophan from chorismate: step 2/5. Functionally, catalyzes the transfer of the phosphoribosyl group of 5-phosphorylribose-1-pyrophosphate (PRPP) to anthranilate to yield N-(5'-phosphoribosyl)-anthranilate (PRA). The sequence is that of Anthranilate phosphoribosyltransferase from Methylocella silvestris (strain DSM 15510 / CIP 108128 / LMG 27833 / NCIMB 13906 / BL2).